The following is a 177-amino-acid chain: Large ribosomal subunit protein uL6 (177 aa).

Belongs to the universal ribosomal protein uL6 family. As to quaternary structure, part of the 50S ribosomal subunit.

Functionally, this protein binds to the 23S rRNA, and is important in its secondary structure. It is located near the subunit interface in the base of the L7/L12 stalk, and near the tRNA binding site of the peptidyltransferase center. In Janthinobacterium sp. (strain Marseille) (Minibacterium massiliensis), this protein is Large ribosomal subunit protein uL6.